A 236-amino-acid polypeptide reads, in one-letter code: Giant extracellular hemoglobin linker 2 chain (236 aa).

One can recognise an LDL-receptor class A domain in the interval 66–108 (NGCEPRHFQCGGSAMECISDLLTCDGSPDCANGADEDSDVCHI). 3 disulfide bridges follow: cysteine 68/cysteine 82, cysteine 75/cysteine 95, and cysteine 89/cysteine 106.

As to quaternary structure, disulfide-linked dimer of identical chains. A model is proposed for the subunit structure of the Tylorrhynchus hemoglobin, consisting of 216 polypeptides chains, 192 heme-containing chains, and 24 linker chains.

Functionally, acts as a linker for the assembly of heme-containing chains in the construction of giant hemoglobin. The chain is Giant extracellular hemoglobin linker 2 chain from Tylorrhynchus heterochetus (Japanese palolo worm).